Consider the following 758-residue polypeptide: 5-methyltetrahydropteroyltriglutamate--homocysteine methyltransferase (758 aa).

5-methyltetrahydropteroyltri-L-glutamate contacts are provided by residues 16–19 (RELK) and Lys-112. Residues 433-435 (IGS) and Glu-486 each bind L-homocysteine. Residues 433 to 435 (IGS) and Glu-486 contribute to the L-methionine site. Residues 517 to 518 (RC) and Trp-563 contribute to the 5-methyltetrahydropteroyltri-L-glutamate site. Asp-601 contributes to the L-homocysteine binding site. Asp-601 contributes to the L-methionine binding site. Glu-607 contacts 5-methyltetrahydropteroyltri-L-glutamate. Positions 643, 645, and 667 each coordinate Zn(2+). Residue His-696 is the Proton donor of the active site. A Zn(2+)-binding site is contributed by Cys-728.

This sequence belongs to the vitamin-B12 independent methionine synthase family. It depends on Zn(2+) as a cofactor.

It carries out the reaction 5-methyltetrahydropteroyltri-L-glutamate + L-homocysteine = tetrahydropteroyltri-L-glutamate + L-methionine. The protein operates within amino-acid biosynthesis; L-methionine biosynthesis via de novo pathway; L-methionine from L-homocysteine (MetE route): step 1/1. Catalyzes the transfer of a methyl group from 5-methyltetrahydrofolate to homocysteine resulting in methionine formation. This Neisseria gonorrhoeae (strain ATCC 700825 / FA 1090) protein is 5-methyltetrahydropteroyltriglutamate--homocysteine methyltransferase.